The primary structure comprises 623 residues: Putative disease resistance protein At5g47280 (623 aa).

NB-ARC domains are found at residues 2–51 (LFNL…VSQS) and 119–249 (VDPR…NMLV). 16-23 (GMIGSGKT) contributes to the ATP binding site. LRR repeat units lie at residues 488–511 (SLNS…SKLQ), 512–534 (ALQL…ICEL), 536–558 (RLVY…IGNV), and 560–581 (TLEK…AVSL).

Belongs to the disease resistance NB-LRR family.

Functionally, potential disease resistance protein. This Arabidopsis thaliana (Mouse-ear cress) protein is Putative disease resistance protein At5g47280.